Consider the following 487-residue polypeptide: Serine/threonine-protein kinase BSK7 (487 aa).

Residue glycine 2 is the site of N-myristoyl glycine attachment. One can recognise a Protein kinase domain in the interval 59 to 325 (ENIVSEHGEK…DLETPSHQLM (267 aa)). Residues 65–73 (HGEKAPNVV) and lysine 87 each bind ATP. The active-site Proton acceptor is the aspartate 181.

Belongs to the protein kinase superfamily. Ser/Thr protein kinase family.

It is found in the cell membrane. The enzyme catalyses L-seryl-[protein] + ATP = O-phospho-L-seryl-[protein] + ADP + H(+). It carries out the reaction L-threonyl-[protein] + ATP = O-phospho-L-threonyl-[protein] + ADP + H(+). Probable serine/threonine kinase that acts as a positive regulator of brassinosteroid (BR) signaling downstream of the receptor kinase BRI1. Functions redundantly with BSK3, BSK5, BSK6 and BSK8. In Arabidopsis thaliana (Mouse-ear cress), this protein is Serine/threonine-protein kinase BSK7.